A 268-amino-acid polypeptide reads, in one-letter code: Kynurenine formamidase (268 aa).

Positions His-33–Trp-37 match the HGGXW motif. Catalysis depends on Ser-107, which acts as the Nucleophile. Active-site residues include Asp-219 and His-251.

Belongs to the kynurenine formamidase family. Homodimer.

It catalyses the reaction N-formyl-L-kynurenine + H2O = L-kynurenine + formate + H(+). It functions in the pathway amino-acid degradation; L-tryptophan degradation via kynurenine pathway; L-kynurenine from L-tryptophan: step 2/2. In terms of biological role, catalyzes the hydrolysis of N-formyl-L-kynurenine to L-kynurenine, the second step in the kynurenine pathway of tryptophan degradation. Kynurenine may be further oxidized to nicotinic acid, NAD(H) and NADP(H). Required for elimination of toxic metabolites. The polypeptide is Kynurenine formamidase (Scheffersomyces stipitis (strain ATCC 58785 / CBS 6054 / NBRC 10063 / NRRL Y-11545) (Yeast)).